A 380-amino-acid polypeptide reads, in one-letter code: Glutamyl-tRNA reductase 1 (380 aa).

Residues 42 to 45, S93, 98 to 100, and Q104 each bind substrate; these read TCNR and ETD. The active-site Nucleophile is C43. An NADP(+)-binding site is contributed by 172–177; that stretch reads GAGAVG.

The protein belongs to the glutamyl-tRNA reductase family. Homodimer.

It carries out the reaction (S)-4-amino-5-oxopentanoate + tRNA(Glu) + NADP(+) = L-glutamyl-tRNA(Glu) + NADPH + H(+). The protein operates within porphyrin-containing compound metabolism; protoporphyrin-IX biosynthesis; 5-aminolevulinate from L-glutamyl-tRNA(Glu): step 1/2. Catalyzes the NADPH-dependent reduction of glutamyl-tRNA(Glu) to glutamate 1-semialdehyde (GSA). The protein is Glutamyl-tRNA reductase 1 of Pyrobaculum calidifontis (strain DSM 21063 / JCM 11548 / VA1).